The primary structure comprises 410 residues: LL-diaminopimelate aminotransferase (410 aa).

Tyrosine 15 and glycine 42 together coordinate substrate. Pyridoxal 5'-phosphate-binding positions include tyrosine 72, 108 to 109 (SK), tyrosine 132, asparagine 187, tyrosine 218, and 246 to 248 (SFS). Lysine 109, tyrosine 132, and asparagine 187 together coordinate substrate. Lysine 249 carries the post-translational modification N6-(pyridoxal phosphate)lysine. The pyridoxal 5'-phosphate site is built by arginine 257 and asparagine 292. Residues asparagine 292 and arginine 388 each contribute to the substrate site.

The protein belongs to the class-I pyridoxal-phosphate-dependent aminotransferase family. LL-diaminopimelate aminotransferase subfamily. As to quaternary structure, homodimer. The cofactor is pyridoxal 5'-phosphate.

The enzyme catalyses (2S,6S)-2,6-diaminopimelate + 2-oxoglutarate = (S)-2,3,4,5-tetrahydrodipicolinate + L-glutamate + H2O + H(+). It participates in amino-acid biosynthesis; L-lysine biosynthesis via DAP pathway; LL-2,6-diaminopimelate from (S)-tetrahydrodipicolinate (aminotransferase route): step 1/1. In terms of biological role, involved in the synthesis of meso-diaminopimelate (m-DAP or DL-DAP), required for both lysine and peptidoglycan biosynthesis. Catalyzes the direct conversion of tetrahydrodipicolinate to LL-diaminopimelate. The sequence is that of LL-diaminopimelate aminotransferase from Geobacter metallireducens (strain ATCC 53774 / DSM 7210 / GS-15).